Reading from the N-terminus, the 483-residue chain is V-type proton ATPase subunit H (483 aa).

A Phosphoserine modification is found at serine 483.

The protein belongs to the V-ATPase H subunit family. V-ATPase is a heteromultimeric enzyme made up of two complexes: the ATP-hydrolytic V1 complex and the proton translocation V0 complex. The V1 complex consists of three catalytic AB heterodimers that form a heterohexamer, three peripheral stalks each consisting of EG heterodimers, one central rotor including subunits D and F, and the regulatory subunits C and H. The proton translocation complex V0 consists of the proton transport subunit a, a ring of proteolipid subunits c9c'', rotary subunit d, subunits e and f, and the accessory subunits ATP6AP1/Ac45 and ATP6AP2/PRR. Interacts with AP2M1.

The protein resides in the cytoplasmic vesicle. Its subcellular location is the clathrin-coated vesicle membrane. In terms of biological role, subunit of the V1 complex of vacuolar(H+)-ATPase (V-ATPase), a multisubunit enzyme composed of a peripheral complex (V1) that hydrolyzes ATP and a membrane integral complex (V0) that translocates protons. V-ATPase is responsible for acidifying and maintaining the pH of intracellular compartments and in some cell types, is targeted to the plasma membrane, where it is responsible for acidifying the extracellular environment. Subunit H is essential for V-ATPase activity, but not for the assembly of the complex. Involved in the endocytosis mediated by clathrin-coated pits, required for the formation of endosomes. The protein is V-type proton ATPase subunit H (ATP6V1H) of Sus scrofa (Pig).